The primary structure comprises 470 residues: Tryptophan synthase beta chain 1, chloroplastic (470 aa).

A compositionally biased stretch (polar residues) spans 1-10 (MAASGTSATF). Residues 1–24 (MAASGTSATFRASVSSAPSSSSQL) are disordered. The segment covering 12–22 (ASVSSAPSSSS) has biased composition (low complexity). Lys165 carries the N6-(pyridoxal phosphate)lysine modification.

The protein belongs to the TrpB family. As to quaternary structure, tetramer of two alpha and two beta chains. The cofactor is pyridoxal 5'-phosphate.

Its subcellular location is the plastid. The protein resides in the chloroplast. It carries out the reaction (1S,2R)-1-C-(indol-3-yl)glycerol 3-phosphate + L-serine = D-glyceraldehyde 3-phosphate + L-tryptophan + H2O. It functions in the pathway amino-acid biosynthesis; L-tryptophan biosynthesis; L-tryptophan from chorismate: step 5/5. Its function is as follows. The beta subunit is responsible for the synthesis of L-tryptophan from indole and L-serine. The sequence is that of Tryptophan synthase beta chain 1, chloroplastic (TSB1) from Arabidopsis thaliana (Mouse-ear cress).